The sequence spans 197 residues: MKVKEVIFAGRSNVGKSTLFSALFKFEVRKGKKPGTTIRPNSFQVGSVIFTDLPGFGYVSGYSRNFSERVKDFVVEYIETNARRIVASVEVIDASSFLEIAERWEKRGYIPVEIEMFEFLNDVTPRVFLAANKMDKVDDITNLNKIAEMLGMQPPWEKWRHVIYPVCAKKGEVSALKRDLKQYLLSLNLRDAAKAFR.

The EngB-type G domain occupies 2–186; sequence KVKEVIFAGR…KRDLKQYLLS (185 aa). GTP-binding positions include 10–17, 35–39, 52–55, 132–135, and 166–168; these read GRSNVGKS, GTTIR, DLPG, NKMD, and VCA. 2 residues coordinate Mg(2+): Ser-17 and Thr-37.

This sequence belongs to the TRAFAC class TrmE-Era-EngA-EngB-Septin-like GTPase superfamily. EngB GTPase family. It depends on Mg(2+) as a cofactor.

Its function is as follows. Necessary for normal cell division and for the maintenance of normal septation. This chain is Probable GTP-binding protein EngB, found in Archaeoglobus fulgidus (strain ATCC 49558 / DSM 4304 / JCM 9628 / NBRC 100126 / VC-16).